The primary structure comprises 531 residues: CTP synthase (531 aa).

Positions 1-265 (MAKYIFITGG…DRIITERLNL (265 aa)) are amidoligase domain. Position 13 (Ser-13) interacts with CTP. Ser-13 contacts UTP. 14–19 (SLGKGI) lines the ATP pocket. Residue Tyr-54 coordinates L-glutamine. Asp-71 contacts ATP. Mg(2+) is bound by residues Asp-71 and Glu-139. Residues 146-148 (DIE), 186-191 (KTKPTQ), and Lys-222 each bind CTP. UTP is bound by residues 186 to 191 (KTKPTQ) and Lys-222. The Glutamine amidotransferase type-1 domain occupies 290–529 (NVALVGKYVE…IRACLEYKRK (240 aa)). Position 349 (Gly-349) interacts with L-glutamine. Cys-376 (nucleophile; for glutamine hydrolysis) is an active-site residue. L-glutamine contacts are provided by residues 377-380 (LGMQ), Glu-400, and Arg-457. Active-site residues include His-502 and Glu-504.

Belongs to the CTP synthase family. In terms of assembly, homotetramer.

It catalyses the reaction UTP + L-glutamine + ATP + H2O = CTP + L-glutamate + ADP + phosphate + 2 H(+). It carries out the reaction L-glutamine + H2O = L-glutamate + NH4(+). The catalysed reaction is UTP + NH4(+) + ATP = CTP + ADP + phosphate + 2 H(+). Its pathway is pyrimidine metabolism; CTP biosynthesis via de novo pathway; CTP from UDP: step 2/2. Allosterically activated by GTP, when glutamine is the substrate; GTP has no effect on the reaction when ammonia is the substrate. The allosteric effector GTP functions by stabilizing the protein conformation that binds the tetrahedral intermediate(s) formed during glutamine hydrolysis. Inhibited by the product CTP, via allosteric rather than competitive inhibition. Functionally, catalyzes the ATP-dependent amination of UTP to CTP with either L-glutamine or ammonia as the source of nitrogen. Regulates intracellular CTP levels through interactions with the four ribonucleotide triphosphates. The polypeptide is CTP synthase (Aquifex aeolicus (strain VF5)).